A 292-amino-acid polypeptide reads, in one-letter code: 2-(5''-triphosphoribosyl)-3'-dephosphocoenzyme-A synthase (292 aa).

Belongs to the CitG/MdcB family.

It carries out the reaction 3'-dephospho-CoA + ATP = 2'-(5''-triphospho-alpha-D-ribosyl)-3'-dephospho-CoA + adenine. Its function is as follows. Catalyzes the formation of 2-(5''-triphosphoribosyl)-3'-dephosphocoenzyme-A, the precursor of the prosthetic group of the holo-acyl carrier protein (gamma chain) of citrate lyase, from ATP and dephospho-CoA. The chain is 2-(5''-triphosphoribosyl)-3'-dephosphocoenzyme-A synthase from Escherichia coli (strain SMS-3-5 / SECEC).